The chain runs to 66 residues: Photosystem II reaction center protein J (66 aa).

The tract at residues M1–P25 is disordered. A helical membrane pass occupies residues L37–Y57.

The protein belongs to the PsbJ family. In terms of assembly, PSII is composed of 1 copy each of membrane proteins PsbA, PsbB, PsbC, PsbD, PsbE, PsbF, PsbH, PsbI, PsbJ, PsbK, PsbL, PsbM, PsbT, PsbX, PsbY, PsbZ, Psb30/Ycf12, peripheral proteins PsbO, CyanoQ (PsbQ), PsbU, PsbV and a large number of cofactors. It forms dimeric complexes.

Its subcellular location is the cellular thylakoid membrane. One of the components of the core complex of photosystem II (PSII). PSII is a light-driven water:plastoquinone oxidoreductase that uses light energy to abstract electrons from H(2)O, generating O(2) and a proton gradient subsequently used for ATP formation. It consists of a core antenna complex that captures photons, and an electron transfer chain that converts photonic excitation into a charge separation. This Synechococcus sp. (strain CC9605) protein is Photosystem II reaction center protein J.